Consider the following 209-residue polypeptide: Large ribosomal subunit protein uL3 (209 aa).

Polar residues predominate over residues 112–122 (GTTRGHGTQGN). Positions 112-146 (GTTRGHGTQGNIKRWGQSRGPETHGSRYHRIPGSM) are disordered.

This sequence belongs to the universal ribosomal protein uL3 family. Part of the 50S ribosomal subunit. Forms a cluster with proteins L14 and L19.

One of the primary rRNA binding proteins, it binds directly near the 3'-end of the 23S rRNA, where it nucleates assembly of the 50S subunit. The protein is Large ribosomal subunit protein uL3 of Lactobacillus johnsonii (strain CNCM I-12250 / La1 / NCC 533).